Reading from the N-terminus, the 321-residue chain is G-protein coupled receptor aex-2 (321 aa).

The Extracellular segment spans residues 1–24 (MNSTDIIANVTKPFVENLTLGETA). N-linked (GlcNAc...) asparagine glycans are attached at residues Asn2, Asn9, and Asn17. Residues 25-45 (FYISCGIVGTVFNALVLWIAL) traverse the membrane as a helical segment. Residues 46–55 (TYINTEDKPR) are Cytoplasmic-facing. Residues 56–76 (QIIVINMTVADLLMCIVYMKT) form a helical membrane-spanning segment. Over 77 to 90 (RPWLSHFNLWLCHP) the chain is Extracellular. Cys88 and Cys161 form a disulfide bridge. Residues 91–111 (YYVIIWTCQMCSCLNLVWLNV) form a helical membrane-spanning segment. Over 112-132 (DKLIYIQFPLHYYQIVNRKRL) the chain is Cytoplasmic. The helical transmembrane segment at 133–153 (LWITAATWGGLYAMNIALVTF) threads the bilayer. Topologically, residues 154 to 175 (LKITRGSCLGVSLNPYVYLLSP) are extracellular. A helical membrane pass occupies residues 176 to 196 (IFYVVMILTSFSLSALIYCIA). The Cytoplasmic segment spans residues 197–221 (HNLTHMEERQRSKLFRRLFFLFSST). Residues 222-242 (LWTFFTCLPYRLLYLFSIFCG) traverse the membrane as a helical segment. Topologically, residues 243–254 (ETCQINNYYKTA) are extracellular. A helical membrane pass occupies residues 255 to 275 (TNLFFRLLIVGIMINPVITIW). Topologically, residues 276–321 (TQRIYRLRLMRMFGRLRENSSTEVLMVSNRRASERPPEHTPLRCDM) are cytoplasmic.

Belongs to the G-protein coupled receptor 1 family. In terms of tissue distribution, expressed in the intestinal muscle, anal depressor, AVL and DVB GABAergic neurons, enteric muscles, the nerve ring, the ventral nerve cord and head mesodermal cells.

Its subcellular location is the cell membrane. The protein resides in the cell projection. It localises to the cilium. G-protein coupled receptor for the nlp-40 neuropeptide. The activity of this receptor is mediated by G proteins which activate adenylyl cyclase. Plays a role in the defecation motor program, which is a coordinated series of three muscle contractions that occurs every 45 seconds. Specifically, acts in GABAergic neurons, such as AVL and DVB, to control the expulsion step of defecation. Required for fatty acid uptake and metabolism by intestinal cells and therefore regulates the levels of triglycerides in the intestine. This is G-protein coupled receptor aex-2 from Caenorhabditis elegans.